The sequence spans 429 residues: UPF0597 protein AHA_1619 (429 aa).

Belongs to the UPF0597 family.

This is UPF0597 protein AHA_1619 from Aeromonas hydrophila subsp. hydrophila (strain ATCC 7966 / DSM 30187 / BCRC 13018 / CCUG 14551 / JCM 1027 / KCTC 2358 / NCIMB 9240 / NCTC 8049).